The chain runs to 132 residues: Translation initiation factor 5A (132 aa).

Hypusine is present on K36.

It belongs to the eIF-5A family.

The protein resides in the cytoplasm. Its function is as follows. Functions by promoting the formation of the first peptide bond. This chain is Translation initiation factor 5A (eIF5A), found in Pyrobaculum neutrophilum (strain DSM 2338 / JCM 9278 / NBRC 100436 / V24Sta) (Thermoproteus neutrophilus).